The sequence spans 711 residues: MESGAVLLESKSSPFNLLHEMHELRLLGHLCDVTVSVEYQGVRKDFMAHKAVLAATSKFFKEVFLNEKSVDGTRTNVYLNEVQVADFASFLEFVYTAKVQVEEDRVQRMLEVAEKLKCLDLSETCFQLKKQMLESVLLELQNFSESQEVEVSSGSQVSAAPAPRASVATDGPHPSGLTDSLDYPGERASNGMSSDLPPKKSKDKLDKKKEVVKPPYPKIRRASGRLAGRKVFVEIPKKKYTRRLREQQKTAEGDVGDYRCPQDQSPDRVGTEMEQVSKNEGCQAGAELEELSKKAGPEEEEEEEEEDEEGEKKKSNFKCSICEKAFLYEKSFLKHSKHRHGVATEVVYRCDTCGQTFANRCNLKSHQRHVHSSERHFPCELCGKKFKRKKDVKRHVLQVHEGGGERHRCGQCGKGLSSKTALRLHERTHTGDRPYGCTECGARFSQPSALKTHMRIHTGEKPFVCDECGARFTQNHMLIYHKRCHTGERPFMCETCGKSFASKEYLKHHNRIHTGSKPFKCEVCFRTFAQRNSLYQHIKVHTGERPYCCDQCGKQFTQLNALQRHRRIHTGERPFMCNACGRTFTDKSTLRRHTSIHDKNTPWKSFLVIVDGSPKNDDGHKTEQPDEEYVSSKLSDKLLSFAENGHFHNLAAVQDTVPTMQENSSADTACKADDSVVSQDTLLATTISELSELTPQTDSMPTQLHSLSNME.

Residues 31 to 103 (CDVTVSVEYQ…VYTAKVQVEE (73 aa)) enclose the BTB domain. The segment covering 153–168 (SGSQVSAAPAPRASVA) has biased composition (low complexity). Disordered regions lie at residues 153 to 220 (SGSQ…PKIR) and 243 to 312 (RLRE…EGEK). 3 stretches are compositionally biased toward basic and acidic residues: residues 197–212 (PPKKSKDKLDKKKEVV), 243–252 (RLREQQKTAE), and 265–277 (SPDRVGTEMEQVS). Positions 298 to 309 (EEEEEEEEEDEE) are enriched in acidic residues. 10 consecutive C2H2-type zinc fingers follow at residues 317 to 340 (FKCSICEKAFLYEKSFLKHSKHRH), 348 to 371 (YRCDTCGQTFANRCNLKSHQRHVH), 377 to 400 (FPCELCGKKFKRKKDVKRHVLQVH), 407 to 429 (HRCGQCGKGLSSKTALRLHERTH), 435 to 457 (YGCTECGARFSQPSALKTHMRIH), 463 to 485 (FVCDECGARFTQNHMLIYHKRCH), 491 to 513 (FMCETCGKSFASKEYLKHHNRIH), 519 to 541 (FKCEVCFRTFAQRNSLYQHIKVH), 547 to 569 (YCCDQCGKQFTQLNALQRHRRIH), and 575 to 597 (FMCNACGRTFTDKSTLRRHTSIH). Serine 613 is modified (phosphoserine).

This sequence belongs to the krueppel C2H2-type zinc-finger protein family. As to quaternary structure, interacts with NCL. Expressed in adult brain, heart, skeletal muscle, kidney and liver. Also detected in fetal brain and kidney, and at lower levels in fetal lung and liver.

It localises to the cytoplasm. The protein localises to the nucleus. It is found in the nucleoplasm. The protein resides in the nucleolus. Its function is as follows. Transcriptional repressor that binds the GZF1 responsive element (GRE) (consensus: 5'-TGCGCN[TG][CA]TATA-3'). May be regulating VSX2/HOX10 expression. The sequence is that of GDNF-inducible zinc finger protein 1 from Homo sapiens (Human).